The sequence spans 214 residues: Outer membrane lipoprotein MapA (214 aa).

The first 17 residues, 1 to 17, serve as a signal peptide directing secretion; that stretch reads MFKKFLIFIVPILFLSA. A lipid anchor (N-palmitoyl cysteine) is attached at C18. The S-diacylglycerol cysteine moiety is linked to residue C18.

The protein localises to the cell outer membrane. This is Outer membrane lipoprotein MapA (mapA) from Campylobacter jejuni subsp. jejuni serotype O:6 (strain 81116 / NCTC 11828).